A 734-amino-acid polypeptide reads, in one-letter code: Photosystem I P700 chlorophyll a apoprotein A2 (734 aa).

The next 8 helical transmembrane spans lie at Ile46–Ala69, Leu135–Gln158, Leu175–Ile199, Ile273–Tyr291, Leu330–Tyr353, Ala369–Ile395, Ala417–His439, and Phe517–Val535. 2 residues coordinate [4Fe-4S] cluster: Cys559 and Cys568. A run of 2 helical transmembrane segments spans residues Ala575–Trp596 and Leu643–Ile665. Residues His654, Met662, and Tyr670 each contribute to the chlorophyll a site. Trp671 provides a ligand contact to phylloquinone. A helical transmembrane segment spans residues Val707–Ala727.

The protein belongs to the PsaA/PsaB family. The PsaA/B heterodimer binds the P700 chlorophyll special pair and subsequent electron acceptors. PSI consists of a core antenna complex that captures photons, and an electron transfer chain that converts photonic excitation into a charge separation. The cyanobacterial PSI reaction center is composed of one copy each of PsaA,B,C,D,E,F,I,J,K,L,M and X, and forms trimeric complexes. Requires PSI electron transfer chain: 5 chlorophyll a, 1 chlorophyll a', 2 phylloquinones and 3 4Fe-4S clusters. PSI core antenna: 90 chlorophyll a, 22 carotenoids, 3 phospholipids and 1 galactolipid. P700 is a chlorophyll a/chlorophyll a' dimer, A0 is one or more chlorophyll a, A1 is one or both phylloquinones and FX is a shared 4Fe-4S iron-sulfur center. as cofactor.

It localises to the cellular thylakoid membrane. The catalysed reaction is reduced [plastocyanin] + hnu + oxidized [2Fe-2S]-[ferredoxin] = oxidized [plastocyanin] + reduced [2Fe-2S]-[ferredoxin]. In terms of biological role, psaA and PsaB bind P700, the primary electron donor of photosystem I (PSI), as well as the electron acceptors A0, A1 and FX. PSI is a plastocyanin/cytochrome c6-ferredoxin oxidoreductase, converting photonic excitation into a charge separation, which transfers an electron from the donor P700 chlorophyll pair to the spectroscopically characterized acceptors A0, A1, FX, FA and FB in turn. Oxidized P700 is reduced on the lumenal side of the thylakoid membrane by plastocyanin or cytochrome c6. The protein is Photosystem I P700 chlorophyll a apoprotein A2 of Synechococcus elongatus (strain ATCC 33912 / PCC 7942 / FACHB-805) (Anacystis nidulans R2).